The chain runs to 329 residues: tRNA (guanine(10)-N2)-dimethyltransferase (329 aa).

In terms of domain architecture, THUMP spans 40–143 (NVENVEIFER…KLWIGIRIRE (104 aa)).

It belongs to the methyltransferase superfamily. Trm-G10 family. In terms of assembly, monomer.

It is found in the cytoplasm. It catalyses the reaction guanosine(10) in tRNA + 2 S-adenosyl-L-methionine = N(2)-dimethylguanosine(10) in tRNA + 2 S-adenosyl-L-homocysteine + 2 H(+). Functionally, catalyzes the adenosylmethionine-dependent methylation of the exocyclic amino group (N(2)) of guanosine at position 10 of various tRNAs. Acts via a two-step process that leads to the formation of either N(2)-monomethyl (m(2)G) or N(2)-dimethylguanosine (m(2)(2)G). The polypeptide is tRNA (guanine(10)-N2)-dimethyltransferase (trmG10) (Pyrococcus abyssi (strain GE5 / Orsay)).